Consider the following 39-residue polypeptide: Conotoxin ArMSGL-013 (39 aa).

Positions 1–5 (RRSLT) are excised as a propeptide. Disulfide bonds link cysteine 12–cysteine 24, cysteine 16–cysteine 33, and cysteine 23–cysteine 37. A Tryptophan amide modification is found at tryptophan 38.

Belongs to the conotoxin O3 superfamily. In terms of tissue distribution, expressed by the venom duct.

It is found in the secreted. This is Conotoxin ArMSGL-013 from Conus arenatus (Sand-dusted cone).